Reading from the N-terminus, the 760-residue chain is General transcription and DNA repair factor IIH helicase subunit XPD (760 aa).

Residues 7–283 (GLLVYFPYDY…KETDEQRLRD (277 aa)) enclose the Helicase ATP-binding domain. 42 to 49 (MPSGTGKT) serves as a coordination point for ATP. Residues Cys116, Cys134, Cys155, and Cys190 each coordinate [4Fe-4S] cluster. The short motif at 234-237 (DEAH) is the DEAH box element. The tract at residues 438 to 637 (MDASLAIKPV…TQSRILKARL (200 aa)) is mediates interaction with MMS19. A Nuclear localization signal motif is present at residues 682-695 (KRFARGDKRGKLPR).

Belongs to the helicase family. RAD3/XPD subfamily. As to quaternary structure, component of the 7-subunit TFIIH core complex composed of XPB/ERCC3, XPD/ERCC2, GTF2H1, GTF2H2, GTF2H3, GTF2H4 and GTF2H5, which is active in NER. The core complex associates with the 3-subunit CDK-activating kinase (CAK) module composed of CCNH/cyclin H, CDK7 and MNAT1 to form the 10-subunit holoenzyme (holo-TFIIH) active in transcription. Interacts with GTF2H2 (p44) which stimulates the 5'-3' helicase activity of this subunit. Component of the MMXD complex, which includes CIAO1, ERCC2, CIAO2B, MMS19 and SLC25A5. Interacts with CIAO1 and CIAO2B; the interaction WITH CIAO2B is direct. Interacts with ATF7IP. Interacts directly with MMS19. Part of TBP-based Pol II pre-initiation complex (PIC), in which Pol II core assembles with general transcription factors and other specific initiation factors including GTF2E1, GTF2E2, GTF2F1, GTF2F2, TCEA1, ERCC2, ERCC3, GTF2H2, GTF2H3, GTF2H4, GTF2H5, GTF2A1, GTF2A2, GTF2B and TBP; this large multi-subunit PIC complex mediates DNA unwinding and targets Pol II core to the transcription start site where the first phosphodiester bond forms. (Microbial infection) Interacts with Epstein-Barr virus EBNA2. The cofactor is Mg(2+). It depends on [4Fe-4S] cluster as a cofactor. In terms of processing, ISGylated.

It is found in the nucleus. It localises to the cytoplasm. The protein localises to the cytoskeleton. Its subcellular location is the spindle. The enzyme catalyses Couples ATP hydrolysis with the unwinding of duplex DNA at the replication fork by translocating in the 5'-3' direction. This creates two antiparallel DNA single strands (ssDNA). The leading ssDNA polymer is the template for DNA polymerase III holoenzyme which synthesizes a continuous strand.. The catalysed reaction is ATP + H2O = ADP + phosphate + H(+). With respect to regulation, interaction with GTF2H2 (p44) results in stimulation of the 5'-3' helicase activity of this subunit. DNA unwinding by this subunit in TFIIH is stimulated 4-fold by XPA and 20-fold by ERCC5/XPG. Its function is as follows. ATP-dependent 5'-3' DNA helicase. Component of the general transcription and DNA repair factor IIH (TFIIH) core complex, not absolutely essential for minimal transcription in vitro. Required for transcription-coupled nucleotide excision repair (NER) of damaged DNA; recognizes damaged bases. Sequestered in chromatin on UV-damaged DNA. When complexed to CDK-activating kinase (CAK), involved in transcription by RNA polymerase II. In NER, TFIIH acts by opening DNA around the lesion to allow the excision of the damaged oligonucleotide and its replacement by a new DNA fragment. The ATP-dependent helicase activity of XPD/ERCC2 is required for DNA opening. Involved in DNA lesion verification. In transcription, TFIIH has an essential role in transcription initiation. When the pre-initiation complex (PIC) has been established, TFIIH is required for promoter opening and promoter escape. Phosphorylation of the C-terminal tail (CTD) of the largest subunit of RNA polymerase II by the kinase module CAK controls the initiation of transcription. XPD/ERCC2 acts by forming a bridge between CAK and the core-TFIIH complex. The structure of the TFIIH transcription complex differs from the NER-TFIIH complex; large movements by XPD/ERCC2 and XPB/ERCC3 are stabilized by XPA which allow this subunit to contact ssDNA. Involved in the regulation of vitamin-D receptor activity. As part of the mitotic spindle-associated MMXD complex it plays a role in chromosome segregation. Might have a role in aging process and could play a causative role in the generation of skin cancers. The chain is General transcription and DNA repair factor IIH helicase subunit XPD (ERCC2) from Homo sapiens (Human).